A 102-amino-acid chain; its full sequence is Large ribosomal subunit protein eL31 (102 aa).

It belongs to the eukaryotic ribosomal protein eL31 family.

In Staphylothermus marinus (strain ATCC 43588 / DSM 3639 / JCM 9404 / F1), this protein is Large ribosomal subunit protein eL31.